Reading from the N-terminus, the 144-residue chain is Ribonuclease VapC45 (144 aa).

The Mg(2+) site is built by D7 and D102.

This sequence belongs to the PINc/VapC protein family. The cofactor is Mg(2+).

Its function is as follows. Toxic component of a type II toxin-antitoxin (TA) system. An RNase. Its cognate antitoxin is VapB45. The protein is Ribonuclease VapC45 of Mycobacterium tuberculosis (strain CDC 1551 / Oshkosh).